The primary structure comprises 208 residues: Ribosomal RNA small subunit methyltransferase G (208 aa).

Residues glycine 75, leucine 80, 126 to 127 (VE), and arginine 141 each bind S-adenosyl-L-methionine.

It belongs to the methyltransferase superfamily. RNA methyltransferase RsmG family.

It localises to the cytoplasm. The enzyme catalyses guanosine(527) in 16S rRNA + S-adenosyl-L-methionine = N(7)-methylguanosine(527) in 16S rRNA + S-adenosyl-L-homocysteine. Its function is as follows. Specifically methylates the N7 position of guanine in position 527 of 16S rRNA. In Marinomonas sp. (strain MWYL1), this protein is Ribosomal RNA small subunit methyltransferase G.